The primary structure comprises 273 residues: Bifunctional protein FolD (273 aa).

NADP(+)-binding positions include G155 to S157, S180, and T221.

It belongs to the tetrahydrofolate dehydrogenase/cyclohydrolase family. As to quaternary structure, homodimer.

The catalysed reaction is (6R)-5,10-methylene-5,6,7,8-tetrahydrofolate + NADP(+) = (6R)-5,10-methenyltetrahydrofolate + NADPH. It catalyses the reaction (6R)-5,10-methenyltetrahydrofolate + H2O = (6R)-10-formyltetrahydrofolate + H(+). It functions in the pathway one-carbon metabolism; tetrahydrofolate interconversion. In terms of biological role, catalyzes the oxidation of 5,10-methylenetetrahydrofolate to 5,10-methenyltetrahydrofolate and then the hydrolysis of 5,10-methenyltetrahydrofolate to 10-formyltetrahydrofolate. This is Bifunctional protein FolD from Coprothermobacter proteolyticus (strain ATCC 35245 / DSM 5265 / OCM 4 / BT).